A 100-amino-acid chain; its full sequence is Urease subunit gamma (100 aa).

The protein belongs to the urease gamma subunit family. As to quaternary structure, heterotrimer of UreA (gamma), UreB (beta) and UreC (alpha) subunits. Three heterotrimers associate to form the active enzyme.

Its subcellular location is the cytoplasm. It carries out the reaction urea + 2 H2O + H(+) = hydrogencarbonate + 2 NH4(+). It functions in the pathway nitrogen metabolism; urea degradation; CO(2) and NH(3) from urea (urease route): step 1/1. This Rhizobium etli (strain ATCC 51251 / DSM 11541 / JCM 21823 / NBRC 15573 / CFN 42) protein is Urease subunit gamma.